Here is a 418-residue protein sequence, read N- to C-terminus: AP-3 complex subunit mu-2 (418 aa).

The MHD domain occupies 176 to 417 (NNEAYFDVVE…MTKAGKFQVR (242 aa)).

It belongs to the adaptor complexes medium subunit family. As to quaternary structure, adaptor protein complex 3 (AP-3) is a heterotetramer composed of two large adaptins (delta-type subunit AP3D1 and beta-type subunit AP3B1 or AP3B2), a medium adaptin (mu-type subunit AP3M1 or AP3M2) and a small adaptin (sigma-type subunit APS1 or AP3S2). AP-3 associates with the BLOC-1 complex.

It is found in the golgi apparatus. Its subcellular location is the cytoplasmic vesicle membrane. In terms of biological role, component of the adaptor complexes which link clathrin to receptors in coated vesicles. Clathrin-associated protein complexes are believed to interact with the cytoplasmic tails of membrane proteins, leading to their selection and concentration. Ap47 is a subunit of the plasma membrane adaptor. In concert with the BLOC-1 complex, AP-3 is required to target cargos into vesicles assembled at cell bodies for delivery into neurites and nerve terminals. This chain is AP-3 complex subunit mu-2 (Ap3m2), found in Mus musculus (Mouse).